The primary structure comprises 483 residues: Glucose-1-phosphate adenylyltransferase large subunit 3, chloroplastic/amyloplastic (483 aa).

The protein belongs to the bacterial/plant glucose-1-phosphate adenylyltransferase family. In terms of assembly, heterotetramer. In terms of tissue distribution, tubers.

The protein localises to the plastid. It is found in the chloroplast. The protein resides in the amyloplast. It catalyses the reaction alpha-D-glucose 1-phosphate + ATP + H(+) = ADP-alpha-D-glucose + diphosphate. The protein operates within glycan biosynthesis; starch biosynthesis. With respect to regulation, activated by 3'phosphoglycerate, inhibited by orthophosphate. Allosteric regulation. Its function is as follows. This protein plays a role in synthesis of starch. It catalyzes the synthesis of the activated glycosyl donor, ADP-glucose from Glc-1-P and ATP. This is Glucose-1-phosphate adenylyltransferase large subunit 3, chloroplastic/amyloplastic (AGPS3) from Solanum tuberosum (Potato).